The chain runs to 481 residues: tRNA pseudouridine(38/39) synthase (481 aa).

Alanine 2 carries the N-acetylalanine modification. The segment covering 29 to 41 (KKEQAKNKEDSNI) has biased composition (basic and acidic residues). Residues 29 to 50 (KKEQAKNKEDSNIRENSAGAGK) are disordered. Aspartate 118 functions as the Nucleophile in the catalytic mechanism. Tyrosine 195 contacts substrate. Phosphothreonine occurs at positions 456, 466, and 468.

It belongs to the tRNA pseudouridine synthase TruA family.

It localises to the nucleus. It carries out the reaction uridine(38/39) in tRNA = pseudouridine(38/39) in tRNA. In terms of biological role, formation of pseudouridine at position 39 in the anticodon stem and loop of transfer RNAs. This chain is tRNA pseudouridine(38/39) synthase (PUS3), found in Homo sapiens (Human).